An 816-amino-acid polypeptide reads, in one-letter code: MISDWCVVLVLLMSRLVFGLNFTEPVNYILKLGEDSSSRLLDCSVNLPVELIKKIDWTHNDIVINNKPNITLSENGQKLVIAHYQSHNSGRYGCKVTAMNEESVQRVFDLLPASETEGNQTIEMMLRIKNDISLLVELVMNKLDLDCTAVGASPINITWIKNDRLIEARSNLSNFRYSFSPNFLKLSIKELRLDDAGIYKCILENKYGKIEHIMTVEIYEKMFSKPIVSSTDKHKVFYVNYGQNLTVPIYVTAFLPHPHFQMLYVYSMTSPNTNETKLALRVLPTMRELTVLEKGQRRGNSISHIKLDYFFNNISEQDFGNYTFMAGNKYGFDIYPFQILHTKYMQTTVFPPMKSSINKIYKEESVEKTVIFIVITSMLAGLIFVAFVIFFICRVRSKDKFKNSNINYIKPLETVILNLGDNNTSGVTMVTSVSASYASRRFRHSLNNNLINDKQKLNLKIAPDPAWEIKLEQLETDCLLGEGAFGRVFRATARDLPNHTGVQTVAVKMLKEDCCEQDLKDFISEIEVMKSIGKHINILNLLAVSSQQGKLYIVVEYCRHGNLRSFLKDNRPVMQANSVITKKITLYDLTSFCLQVARGMNFLASKKCIHRDIAARNVLVGEGYLMKIADFGLARDIHEQDYYRKCTDGRLPVKWMAIEALFDRVYTTQSDIWSFGILAWEIVTFGGSPYPGIALEKLFDLLKQGYRMERPLNCTDDMYTLMLNCWKEIPSKRPTFSQLIEDLERMLLDASSTEYIDLQPIQPERTESFSTSLHTSASMLNTDLHEKNKCDHDEISFTHEDGLSEADILLSHYAVS.

The first 19 residues, 1-19, serve as a signal peptide directing secretion; sequence MISDWCVVLVLLMSRLVFG. The Extracellular segment spans residues 20-370; that stretch reads LNFTEPVNYI…YKEESVEKTV (351 aa). Asn21, Asn69, Asn119, Asn156, Asn171, Asn244, Asn274, Asn313, and Asn321 each carry an N-linked (GlcNAc...) asparagine glycan. One can recognise an Ig-like C2-type 1 domain in the interval 25-105; it reads PVNYILKLGE…VTAMNEESVQ (81 aa). Cys43 and Cys94 are joined by a disulfide. The Ig-like C2-type 2 domain maps to 126-217; it reads LRIKNDISLL…GKIEHIMTVE (92 aa). A disulfide bond links Cys147 and Cys201. Residues 371–391 traverse the membrane as a helical segment; it reads IFIVITSMLAGLIFVAFVIFF. Topologically, residues 392-816 are cytoplasmic; that stretch reads ICRVRSKDKF…DILLSHYAVS (425 aa). The Protein kinase domain occupies 474 to 747; sequence LETDCLLGEG…QLIEDLERML (274 aa). Residues 480 to 488 and Lys508 contribute to the ATP site; that span reads LGEGAFGRV. The active-site Proton acceptor is the Asp612. A Phosphotyrosine; by autocatalysis modification is found at Tyr643.

Belongs to the protein kinase superfamily. Tyr protein kinase family. Fibroblast growth factor receptor subfamily.

It localises to the membrane. It carries out the reaction L-tyrosyl-[protein] + ATP = O-phospho-L-tyrosyl-[protein] + ADP + H(+). Its function is as follows. Receptor for basic fibroblast growth factor. This chain is Fibroblast growth factor receptor (FGFR), found in Hydra vulgaris (Hydra).